A 28-amino-acid chain; its full sequence is Alkaline serine protease NJP (28 aa).

Inhibited by PMSF. Not or very weakly inhibited by EDTA, EGTA, beta-mercaptoethanol, benzamidine, aprotinin, iodoacetic acid, pepstatin A and SBTI. Alkaline thrombin-like serine protease. Has fibrinolytic and fibrinogenolytic but not plasminogenolytic activity. Cleaves fibrinogen chains Aalpha, Bbeta and gamma chains in that order. Cleaves after Arg and Lys residues. The polypeptide is Alkaline serine protease NJP (Hediste japonica (Polychaete worm)).